Consider the following 7124-residue polypeptide: MAKMGKYGLGFKWAPEFPWMLPNASEKLGSPERSEEDGFCPSAAQEPKTKGKTLINHVRVDCSRLPALECCVQSAIIRDIFVDEDPLNVEASTMMALQFGSAVLVKPSKRLSIQAWAKLGVLPKTPAMGLFKRFCLCNTRECVCDAHVAFQLFTVQPDGVCLGNGRFIGWFVPVTAIPAYAKQWLQPWSILLRKGGNKGSVTSGHFRRAVTMPVYDFNVEDACEEVHLNPKGKYSRKAYALLKGYRGVKSILFLDQYGCDYTGRLAKGLEDYGDCTLEEMKELFPVWCDSLDNEVVVAWHVDRDPRAVMRLQTLATIRSIGYVGQPTEDLVDGDVVVREPAHLLAANAIVKRLPRLVETMLYTDSSVTEFCYKTKLCDCGFITQFGYVDCCGDACDFRGWVPGNMMDGFLCPGCSKSYMPWELEAQSSGVIPKGGVLFTQSTDTVNRESFKLYGHAVVPFGSAVYWSPYPGMWLPVIWSSVKSYADLTYTGVVGCKAIVQETDAICRSLYMDYVQHKCGNLEQRAILGLDDVYHRQLLVNRGDYSLLLENVDLFVKRRAEFACKFATCGDGLVPLLLDGLVPRSYYLIKSGQAFTSMMVNFSHEVTDMCMDMALLFMHDVKVATKYVKKVTGKLAVRFKALGVAVVRKITEWFDLAVDTAASAAGWLCYQLVNGLFAVANGGITFLSDVPELVKNFVDKFKVFFKVLIDSMSVSVLSGLTVVKTASNRVCLAGCKVYEVVQKRLSAYVMPVGCNEATCLVGEIEPAVVEDDVVDVVKAPLTYQGCCKPPTSFEKICVVDKLYMAKCGDQFYPVVVDNDTIGVLDQCWRFPCAGKKVEFNDKPKVKEIPSTRKIKINFALDATFDSVLSKACSEFEVDKDVTLDELLDVVLDAVESTLSPCKEHDVIGTKVCALLNRLAEDYVYLFDEGGEEVIAPKMYCSFSAPDDEDCVAADVVDADENQGDDADDSAALVTDTQEEDGVAKGQVGVAESDARLDQVEAFDIEKVEDPILNELSAELNAPADKTYEDVLAFDAIYSEALSAFYAVPGDETHFKVCGFYSPAIERTNCWLRSTLIVMQSLPLEFKDLEMQKLWLSYKSSYNKEFVDKLVKSVPKSIILPQGGYVADFAYFFLSQCSFKAYANWRCLKCDMDLKLQGLDAMFFYGDVVSHVCKCGTGMTLLSADIPYTLHFGLRDDKFCAFYTPRKVFRAACVVDVNDCHSMAVVDGKQIDGKVVTKFNGDKYDFMVGHGMAFSMSAFEIAQLYGSCITPNVCFVKGDVIKVLRRVGAEVIVNPANGRMAHGAGVAGAIAKAAGKSFIKETADMVKNQGVCQVGECYESTGGNLCKTVLNIVGPDARGHGKQCYSFLERAYQHINKCDDVVTTLISAGIFSVPTDVSLTYLIGVVTKNVILVSNNKDDFDVIEKCQVTSIAGTKALSLQLAKNLCRDVKFETNACDSLFSDSCFVSSYDVLQEVELLRHDIQLDDDARVFVQAHMDNLPADWRLVNKFDSVDGVRTVKYFECPGEIFVSSQGKKFGYVQNGSFKVASVSQIRALLANKVDVLCTVDGVNFRSCCVAEGEVFGKTLGSVFCDGINVTKVRCSAIHKGKVFFQYSGLSAADLVAVTDAFGFDEPQLLKYYNMLGMCKWPVVVCGNYFAFKQSNNNCYINVACLMLQHLSLKFHKWQWQEAWNEFRSGKPLRFVSLVLAKGSFKFNEPSDSTDFMRVVLREADLSGATCDFEFVCKCGVKQEQRKGVDAVMHFGTLDKGDLAKGYTIACTCGNKLVHCTQLNVPFLICSNKPEGKKLPDDVVAANIFTGGSLGHYTHVKCKPKYQLYDACNVSKVSEAKGNFTDCLYLKNLKQTFSSKLTTFYLDDVKCVEYNPDLSQYYCESGKYYTKPIIKAQFRTFEKVEGVYTNFKLVGHSIAEKFNAKLGFDCNSPFTEYKITEWPTATGDVVLASDDLYVSRYSGGCVTFGKPVIWLGHEEASLKSLTYFNRPSVVCENKFNVLPVDVSEPTDKGPVPAAVLVTGALSGAATAPGTAKEQKVCASDSVVDQVVSGFLSDLSGATVDVKEVKLNGVKKPIKVEDSVVVNDPTSETKVVKSLSIVDVYDMFLTGCRYVVWMANELSRLVNSPTVREYVKWGMTKIVIPAKLVLLRDEKQEFVAPKVVKAKVIACYSAVKWFFLYCFSWIKFNTDNKVIYTTEVASKLTFNLCCLAFKNALQTFNWNVVSRGFFLVATVFLLWFNFLYANVILSDFYLPNIGFFPTFVGQIVAWVKTTFGIFTLCDLYQVSDVGYRSSFCNGSMVCELCFSGFDMLDNYDAINVVQHVVDRRVSFDYISLFKLVVELVIGYSLYTVCFYPLFGLIGMQLLTTWLPEFFMLETMHWSARFFVFVANMLPAFTLLRFYIVVTAMYKIFCLCRHVMYGCSRPGCLFCYKRNRSVRVKCSTVVGGTLRYYDVMANGGTGFCAKHQWNCLNCSAFGPGNTFITHEAAADLSKELKRPVNPTDSAYYLVTEVKQVGCSMRLFYERDGQRVYDDVSASLFVDMNGLLHSKVKGVPETHVVVVENEADKAGFLNAAVFYAQSLYRPMLLVEKKLITTANTGLSVSQTMFDLYVDSLLGVLDVDRKSLTSFVNAAHNSLKEGVQLEQVMDTFIGCARRKCAIDSDVETKSITKSIMSAVNAGVDFTDESCNNLVPTYVKSDTIVAADLGVLIQNNAKHVQANVAKAANVACIWSVDAFNQLSADLQHRLRKACSKTGLKIKLTYNKQEANVPILTTPFSLKGGAVFSKVLQWLFVVNLICFIVLWALMPTYAVHKSDMQLPLYASFKVIDNGVLRDVTVTDACFANKFIQFDQWYESTFGLVYYRNSRACPVVVAVIDQDIGYTLFNVPTKVLRYGFHVLHFITHAFATDSVQCYTPHMQIPYDNFYASGCVLSSLCTMLAHADGTPHPYCYTEGIMHNASLYDSLAPHVRYNLANSNGYIRFPEVVSEGIVRIVRTRSMTYCRVGLCEDAEEGVCFNFNSSWVLNNPYYRAMPGTFCGRNAFDLIHQVLGGLVRPIDFFALTASSVAGAILAIIVVLAFYYLIKLKRAFGDYTSVVVINVIVWCINFLMLFVFQVYPTLSCLYACFYFYTTLYFPSEISVVMHLQWLVMYGAIMPLWFCIIYVAVVVSNHALWLFSYCRKLGTEVRSDGTFEEMSLTTFMITKESYCKLKNSVSDVAFNRYLSLYNKYRYFSGKMDTAAYREAACSQLAKAMETFNHNNGNDVLYQPPTASVTTSFLQSGIVKMVFPTSKVEPCVVSVTYGNMTLNGLWLDDKVYCPRHVICSSADMTDPDYSNLLCRVISSDFCVMSGRMSLTVMSYQMQGSLLVLTVTLQNPNTPKYSFGVVKPGETFTVLAAYNGKSQGAFHVTMRSSYTIKGSFLCGSCGSVGYVLTGDSVRFVYMHQLELSTGCHTGTDFSGNFYGPYRDAQVVQLPVQDYTQTVNVVAWLYAAILNRCNWFVQSDSCSLEEFNVWAMTNGFSSIKADLVLDALASMTGVTVEQILAAIKRLYSGFQGKQILGSCVLEDELTPSDVYQQLAGVKLQSKRTRVVKGTCCWILASTLLFCSIISAFVKWTMFMYVTTHMLGVTLCALCFVSFAMLLVKHKHLYLTMFIMPVLCTLFYTNYLVVYKQSFRGLAYAWLSHFVPAVDYTYMDEVLYGVVLLVAMVFVTMRSINHDVFSVMFLVGRLVSLVSMWYFGANLEEEVLLFLTSLFGTYTWTTMLSLATAKVIAKWLAVNVLYFTDVPQVKLVLLSYLCIGYVCCCYWGVLSLLNSIFRMPLGVYNYKISVQELRYMNANGLRPPRNSFEALVLNFKLLGIGGVPVIEVSQIQSRLTDVKCVNVVLLNCLQHLHIASSSKLWQYCSTLHNEILATSDLSVAFDKLAQLLVVLFANPAAVDSKCLASIEEVSDDYVRDSTVLQALQSEFVNMASFVEYELAKKNLDEAKASGSANQQQIKQLEKACNIAKSAYERDRAVARKLERMADLALTNMYKEARINDKKSKVVSALQTMLFSMIRKLDNQALNSILDNAVKGCVPLNAIPSLTSNTLTIIVPDKQVFDQVVDNVYVTYAGNVWHIQSIQDADGAVKQLNEIDVNITWPLVIAANRHNEVSSVVLQNNELMPQKLRTQVVNSGSDMNCNTPTQCYYNTTGMGKIVYAILSDCDGLKYTKIVKEDGNCVVLELDPPCKFSVQDVKGLKIKYLYFVKGCNTLARGWVVGTLSSTVRLQAGTATEYASNSAIRSLCAFSVDPKKTYLDYIQQGGAPVTNCVKMLCDHAGTGMAITIKPEATTNQDSYGGASVCIYCRSRVEHPDVDGLCKLRGKFVQVPLGIKDPVSYVLTHDVCQVCGFWRDGSCSCVGTGSQFQSKDTNFLNRVRGTSVNARLVPCASGLDTDVQLRAFDICNANRAGIGLYYKVNCCRFQRADEDGNTLDKFFVIKRTNLEVYNKEKECYELTKECGVVAEHEFFTFDVEGSRVPHIVRKDLSKYTMLDLCYALRHFDRNDCSTLKEILLTYAECDESYFQKKDWYDFVENSDIINVYKKLGPIFNRALLNTAKFADTLVEAGLVGVLTLDNQDLYGQWYDFGDFVKTVPGCGVAVADSYYSYMMPMLTMCHALDSELFINGTYREFDLVQYDFTDFKLELFNKYFKYWSMTYHPNTCECEDDRCIIHCANFNILFSMVLPKTCFGPLVRQIFVDGVPFVVSIGYHYKELGVVMNMDVDTHRYRLSLKDLLLYAADPALHVASASALLDLRTCCFSVAAITSGVKFQTVKPGNFNQDFYEFILSKGLLKEGSSVDLKHFFFTQDGNAAITDYNYYKYNLPTMVDIKQLLFVLEVVNKYFEIYDGGCIPATQVIVNNYDKSAGYPFNKFGKARLYYEALSFEEQDEVYAYTKRNVLPTLTQMNLKYAISAKNRARTVAGVSILSTMTGRMFHQKCLKSIAATRGVPVVIGTTKFYGGWDDMLRRLIKDVDSPVLMGWDYPKCDRAMPNILRIISSLVLARKHDSCCSHTDRFYRLANECAQVLSEIVMCGGCYYVKPGGTSSGDATTAFANSVFNICQAVSANVCSLMACNGHKIEDLSIRELQKRLYSNVYRADHVDPAFVNEYYEFLNKHFSMMILSDDGVVCYNSEFASKGYIANISAFQQVLYYQNNVFMSEAKCWVETDIEKGPHEFCSQHTMLVKMDGDEVYLPYPDPSRILGAGCFVDDLLKTDSVLLIERFVSLAIDAYPLVYHENPEYQNVFRVYLEYIKKLYNDLGNQILDSYSVILSTCDGQKFTDETFYKNMYLRSAVMQSVGACVVCSSQTSLRCGSCIRKPLLCCKCAYDHVMSTDHKYVLSVSPYVCNSPGCDVNDVTKLYLGGMSYYCEDHKPQYSFKLVMNGMVFGLYKQSCTGSPYIEDFNKIASCKWTEVDDYVLANECTERLKLFAAETQKATEESFKQCYASATIREIVSDRELILSWEIGKVRPPLNKNYVFTGYHFTSNGKTVLGEYVFDKSELTNGVYYRATTTYKLSVGDVFILTSHAVSSLSAPTLVPQENYTSIRFASVYSVPETFQNNVPNYQHIGMKRYCTVQGPPGTGKSHLAIGLAVYYCTARVVYTAASHAAVDALCEKAYKFLNINDCTRIVPAKVRVDCYDKFKVNDTTRKYVFTTINALPELVTDIIVVDEVSMLTNYELSVINSRVRAKHYVYIGDPAQLPAPRVLLNKGTLEPRYFNSVTKLMCCLGPDIFLGTCYRCPKEIVDTVSALVYHNKLKAKNDNSSMCFKVYYKGQTTHESSSAVNMQQIYLISKFLKANPSWSNAVFISPYNSQNYVAKRVLGLQTQTVDSAQGSEYDFVIYSQTAETAHSVNVNRFNVAITRAKKGILCVMSSMQLFESLNFSTLTLDKINNPRLQCTTNLFKDCSRSYAGYHPAHAPSFLAVDDKYKVGGDLAVCLNVADSAVTYSRLISLMGFKLDLTLDGYCKLFITRDEAIRRVRAWVGFDAEGAHATRDSIGTNFPLQLGFSTGIDFVVEATGMFAERDGYVFKKAVARAPPGEQFKHLVPLMSRGQKWDVVRIRIVQMLSDHLVDLADSVVLVTWAASFELTCLRYFAKVGKEVVCSVCNKRATCFNSRTGYYGCWRHSYSCDYLYNPLIVDIQQWGYTGSLTSNHDLICSVHKGAHVASSDAIMTRCLAVHDCFCKSVNWSLEYPIISNEVSVNTSCRLLQRVMFRAAMLCNRYDVCYDIGNPKGLACVKGYDFKFYDASPVVKSVKQFVYKYEAHKDQFLDGLCMFWNCNVDKYPANAVVCRFDTRVLNKLNLPGCNGGSLYVNKHAFHTSPFTRAAFENLKPMPFFYYSDTPCVYMEGMESKQVDYVPLRSATCITRCNLGGAVCLKHAEDYREYLESYNTATTAGFTFWVYKTFDFYNLWNTFTRLQSLENVVYNLVNAGHFDGRAGELPCAVIGEKVIAKIQNEDVVVFKNNTPFPTNVAVELFAKRSIRPHPELKLFRNLNIDVCWSHVLWDYAKDSVFCSSTYKVCKYTDLQCIESLNVLFDGRDNGALEAFKKCRDGVYINTTKIKSLSMIKGPQRADLNGVVVEKVGDSDVEFWFAMRRDGDDVIFSRTGSLEPSHYRSPQGNPGGNRVGDLSGNEALARGTIFTQSRFLSSFAPRSEMEKDFMDLDEDVFIAKYSLQDYAFEHVVYGSFNQKIIGGLHLLIGLARRQQKSNLVIQEFVPYDSSIHSYFITDENSGSSKSVCTVIDLLLDDFVDIVKSLNLNCVSKVVNVNVDFKDFQFMLWCNEEKVMTFYPRLQAAADWKPGYVMPVLYKYLESPLERVNLWNYGKPITLPTGCLMNVAKYTQLCQYLNTTTLAVPANMRVLHLGAGSDKDVAPGSAVLRQWLPAGSILVDNDINPFVSDSVASYYGNCITLPIACQWDLIISDMYDPLTKNIGEYNVSKDGFFTYLCHLIRDKLALGGSVAIKITEFSWNAELYSLMGKFAFWTIFCTNVNASSSEGFLIGINWLNRTRTEIDGKTMHANYLFWRNSTMWNGGAYSLFDMSKFPLKVAGTAVVSLKPDQINDLVLSLIEKGKLLVRDTRKEVFVGDSLVNVK.

The tract at residues 25–45 (SEKLGSPERSEEDGFCPSAAQ) is disordered. One can recognise a CoV Nsp1 globular domain in the interval 54–196 (LINHVRVDCS…PWSILLRKGG (143 aa)). Positions 217–247 (FNVEDACEEVHLNPKGKYSRKAYALLKGYRG) constitute a BetaCoV Nsp1 C-terminal domain. Residues 251 to 511 (ILFLDQYGCD…TDAICRSLYM (261 aa)) form the CoV Nsp2 N-terminal domain. Positions 390, 395, 411, and 414 each coordinate Zn(2+). The interval 390-414 (CCGDACDFRGWVPGNMMDGFLCPGC) is C4. The region spanning 518-706 (CGNLEQRAIL…VDKFKVFFKV (189 aa)) is the CoV Nsp2 middle domain. Positions 726 to 832 (SNRVCLAGCK…LDQCWRFPCA (107 aa)) constitute a CoV Nsp2 C-terminal domain. Residues 834–946 (KKVEFNDKPK…MYCSFSAPDD (113 aa)) form the Ubiquitin-like 1 domain. In terms of domain architecture, Peptidase C16 1 spans 1031-1268 (AFDAIYSEAL…IAQLYGSCIT (238 aa)). Cysteine 1068 serves as the catalytic For PL1-PRO activity. The Zn(2+) site is built by cysteine 1145, cysteine 1148, cysteine 1171, and cysteine 1173. Residues 1145–1173 (CLKCDMDLKLQGLDAMFFYGDVVSHVCKC) form a C4-type 1 zinc finger. Active-site for PL1-PRO activity residues include histidine 1219 and aspartate 1230. The region spanning 1269–1429 (PNVCFVKGDV…VIEKCQVTSI (161 aa)) is the Macro domain. Residues 1484–1556 (DDARVFVQAH…VSQIRALLAN (73 aa)) enclose the DPUP domain. The Ubiquitin-like 2 domain occupies 1555–1610 (ANKVDVLCTVDGVNFRSCCVAEGEVFGKTLGSVFCDGINVTKVRCSAIHKGKVFFQ). The region spanning 1625–1884 (AFGFDEPQLL…CVEYNPDLSQ (260 aa)) is the Peptidase C16 2 domain. Cysteine 1663 serves as the catalytic For PL2-PRO activity. Residues cysteine 1741, cysteine 1743, cysteine 1775, and cysteine 1777 each coordinate Zn(2+). A C4-type 2 zinc finger spans residues 1741–1777 (CKCGVKQEQRKGVDAVMHFGTLDKGDLAKGYTIACTC). Active-site for PL2-PRO activity residues include histidine 1820 and aspartate 1834. In terms of domain architecture, Nucleic acid-binding spans 1898–1999 (IKAQFRTFEK…TYFNRPSVVC (102 aa)). In terms of domain architecture, G2M spans 2053 to 2202 (QVVSGFLSDL…TDNKVIYTTE (150 aa)). The next 2 membrane-spanning stretches (helical) occupy residues 2232-2252 (FFLV…NVIL) and 2260-2280 (IGFF…TFGI). The segment at 2232-2408 (FFLVATVFLL…FTLLRFYIVV (177 aa)) is HD1. Residues 2268–2329 (GQIVAWVKTT…AINVVQHVVD (62 aa)) form the 3Ecto domain. Cystine bridges form between cysteine 2284–cysteine 2308 and cysteine 2299–cysteine 2305. A run of 2 helical transmembrane segments spans residues 2346–2366 (LVIG…LIGM) and 2388–2408 (FFVF…YIVV). Positions 2416–2506 (CLCRHVMYGC…ELKRPVNPTD (91 aa)) are Y1. The 368-residue stretch at 2416 to 2783 (CLCRHVMYGC…LTTPFSLKGG (368 aa)) folds into the CoV Nsp3 Y domain. Histidine 2420, cysteine 2425, cysteine 2430, cysteine 2433, cysteine 2466, histidine 2469, cysteine 2473, and cysteine 2476 together coordinate Zn(2+). The interval 2420 to 2433 (HVMYGCSRPGCLFC) is ZF1. Residues 2466-2476 (CAKHQWNCLNC) form a ZF2 region. The tract at residues 2507–2599 (SAYYLVTEVK…LVEKKLITTA (93 aa)) is Y2. The interval 2507–2783 (SAYYLVTEVK…LTTPFSLKGG (277 aa)) is coV-Y. The interval 2600–2682 (NTGLSVSQTM…KSIMSAVNAG (83 aa)) is Y3. Positions 2683–2783 (VDFTDESCNN…LTTPFSLKGG (101 aa)) are Y4. 7 helical membrane-spanning segments follow: residues 2789–2809 (VLQW…ALMP), 2869–2889 (ACPV…FNVP), 3042–3062 (AFDL…FFAL), 3064–3084 (ASSV…YYLI), 3096–3116 (VVVI…VFQV), 3123–3143 (LYAC…SVVM), and 3148–3168 (LVMY…AVVV). Residues 2789–3168 (VLQWLFVVNL…FCIIYVAVVV (380 aa)) are HD2. A Nsp4C domain is found at 3182–3279 (LGTEVRSDGT…TASVTTSFLQ (98 aa)). The 303-residue stretch at 3280 to 3582 (SGIVKMVFPT…YQQLAGVKLQ (303 aa)) folds into the Peptidase C30 domain. Residues histidine 3320 and cysteine 3424 each act as for 3CL-PRO activity in the active site. The interval 3525–3808 (LVLDALASMT…VCCCYWGVLS (284 aa)) is HD3. 7 helical membrane passes run 3591–3611 (GTCC…SAFV), 3621–3641 (THML…MLLV), 3647–3667 (YLTM…YLVV), 3690–3710 (TYMD…FVTM), 3717–3737 (VFSV…WYFG), 3744–3764 (VLLF…LSLA), and 3788–3808 (LVLL…GVLS). The RdRp Nsp7 cofactor domain maps to 3870–3958 (SRLTDVKCVN…DYVRDSTVLQ (89 aa)). One can recognise a RdRp Nsp8 cofactor domain in the interval 3959–4155 (ALQSEFVNMA…HNEVSSVVLQ (197 aa)). The Nsp9 ssRNA-binding domain occupies 4156–4265 (NNELMPQKLR…GTLSSTVRLQ (110 aa)). One can recognise an ExoN/MTase coactivator domain in the interval 4266–4403 (AGTATEYASN…CVGTGSQFQS (138 aa)). Positions 4339, 4342, 4348, 4355, 4381, 4384, 4392, and 4394 each coordinate Zn(2+). Zinc fingers lie at residues 4339 to 4355 (CIYC…DGLC) and 4381 to 4394 (CQVC…SCSC). The NiRAN domain occupies 4408-4663 (FLNRVRGTSV…DSELFINGTY (256 aa)). Mn(2+)-binding residues include asparagine 4611 and aspartate 4620. The Nsp12 Interface domain occupies 4664–4762 (REFDLVQYDF…MNMDVDTHRY (99 aa)). Residues histidine 4693, cysteine 4699, cysteine 4704, cysteine 4708, and cysteine 4885 each contribute to the Zn(2+) site. Residues 4763–5330 (RLSLKDLLLY…NMYLRSAVMQ (568 aa)) form the Nsp12 RNA-dependent RNA polymerase domain. The segment at 4765-4979 (SLKDLLLYAA…HQKCLKSIAA (215 aa)) is rdRp Fingers N-ter. The rdRp Palm N-ter stretch occupies residues 4980–5018 (TRGVPVVIGTTKFYGGWDDMLRRLIKDVDSPVLMGWDYP). Positions 5010-5172 (PVLMGWDYPK…CYNSEFASKG (163 aa)) constitute a RdRp catalytic domain. The segment at 5019–5077 (KCDRAMPNILRIISSLVLARKHDSCCSHTDRFYRLANECAQVLSEIVMCGGCYYVKPGG) is rdRp Fingers C-ter. Positions 5040, 5043, and 5044 each coordinate Zn(2+). The rdRp Palm C-ter stretch occupies residues 5078 to 5213 (TSSGDATTAF…EKGPHEFCSQ (136 aa)). Catalysis depends on residues serine 5157, aspartate 5158, and aspartate 5159. Residues 5214–5330 (HTMLVKMDGD…NMYLRSAVMQ (117 aa)) form a rdRp Thumb region. In terms of domain architecture, CV ZBD spans 5331 to 5443 (SVGACVVCSS…EDFNKIASCK (113 aa)). 12 residues coordinate Zn(2+): cysteine 5335, cysteine 5338, cysteine 5346, cysteine 5349, cysteine 5356, cysteine 5359, histidine 5363, histidine 5369, cysteine 5380, cysteine 5385, cysteine 5402, and histidine 5405. In terms of domain architecture, (+)RNA virus helicase ATP-binding spans 5586 to 5767 (SVPETFQNNV…MCCLGPDIFL (182 aa)). 5611-5618 (GPPGTGKS) provides a ligand contact to ATP. The (+)RNA virus helicase C-terminal domain maps to 5768 to 5937 (GTCYRCPKEI…RLQCTTNLFK (170 aa)). Positions 6001 to 6216 (LFITRDEAIR…RCLAVHDCFC (216 aa)) constitute an ExoN domain. Residues aspartate 6019, glutamate 6021, and glutamate 6120 contribute to the active site. Zn(2+)-binding residues include cysteine 6136, cysteine 6139, cysteine 6155, histidine 6158, histidine 6186, cysteine 6190, and histidine 6193. Residues histidine 6197 and aspartate 6202 contribute to the active site. Cysteine 6208 contributes to the Zn(2+) binding site. An N7-MTase domain is found at 6225–6451 (YPIISNEVSV…NLWNTFTRLQ (227 aa)). 6260–6266 (DIGNPKG) serves as a coordination point for S-adenosyl-L-methionine. The gpppA-binding stretch occupies residues 6338 to 6352 (CNGGSLYVNKHAFHT). 4 residues coordinate Zn(2+): cysteine 6376, cysteine 6397, cysteine 6408, and histidine 6411. Residues 6452–6512 (SLENVVYNLV…NVAVELFAKR (61 aa)) enclose the Nsp15 N-terminal oligomerization domain. In terms of domain architecture, AV-Nsp11N/CoV-Nsp15M spans 6513-6633 (SIRPHPELKL…FAMRRDGDDV (121 aa)). One can recognise a NendoU domain in the interval 6683–6822 (APRSEMEKDF…NEEKVMTFYP (140 aa)). Active-site residues include histidine 6713, histidine 6728, lysine 6768, lysine 6871, aspartate 6955, lysine 6995, and glutamate 7028. The Nidovirus-type SAM-dependent 2'-O-MTase domain occupies 6827–7121 (AADWKPGYVM…KEVFVGDSLV (295 aa)).

This sequence belongs to the coronaviruses polyprotein 1ab family. As to quaternary structure, interacts with host PHB and PHB2. In terms of assembly, interacts with papain-like protease nsp3 and non-structural protein 6. Monomer. Homodimer. Only the homodimer shows catalytic activity. As to quaternary structure, interacts with nsp8 and nsp12 to form the replication-transcription complex (RTC): nsp12, nsp7, two subunits of nsp8, and up to two subunits of nsp13. In terms of assembly, interacts with nsp7, nsp13 and nsp12 to form the replication-transcription complex (RTC): nsp12, nsp7, two subunits of nsp8, and up to two subunits of nsp13. Interacts with nsp12. As to quaternary structure, interacts with proofreading exoribonuclease nsp14 and 2'-O-methyltransferase nsp16; these interactions enhance nsp14 and nsp16 enzymatic activities. In terms of assembly, interacts with nsp7 and nsp8 to form the replication-transcription complex (RTC): nsp12, nsp7, two subunits of nsp8, and up to two subunits of nsp13. Interacts with nsp9. Interacts with nsp8 to form the replication-transcription complex (RTC): nsp12, nsp7, two subunits of nsp8, and up to two subunits of nsp13. Mn(2+) is required as a cofactor. It depends on Mg(2+) as a cofactor. Post-translationally, specific enzymatic cleavages in vivo by its own proteases yield mature proteins. 3CL-PRO and PL-PRO proteinases are autocatalytically processed.

It is found in the host membrane. Its subcellular location is the host cytoplasm. It localises to the host perinuclear region. The protein localises to the host endoplasmic reticulum-Golgi intermediate compartment. It catalyses the reaction RNA(n) + a ribonucleoside 5'-triphosphate = RNA(n+1) + diphosphate. The enzyme catalyses ATP + H2O = ADP + phosphate + H(+). The catalysed reaction is Thiol-dependent hydrolysis of ester, thioester, amide, peptide and isopeptide bonds formed by the C-terminal Gly of ubiquitin (a 76-residue protein attached to proteins as an intracellular targeting signal).. It carries out the reaction a 5'-end (N(7)-methyl 5'-triphosphoguanosine)-ribonucleoside in mRNA + S-adenosyl-L-methionine = a 5'-end (N(7)-methyl 5'-triphosphoguanosine)-(2'-O-methyl-ribonucleoside) in mRNA + S-adenosyl-L-homocysteine + H(+). It catalyses the reaction uridylyl-uridylyl-ribonucleotide-RNA = a 3'-end uridylyl-2',3'-cyclophospho-uridine-RNA + a 5'-end dephospho-ribonucleoside-RNA. The enzyme catalyses a 5'-end diphospho-ribonucleoside in mRNA + GTP + H(+) = a 5'-end (5'-triphosphoguanosine)-ribonucleoside in mRNA + diphosphate. The catalysed reaction is a 5'-end (5'-triphosphoguanosine)-ribonucleoside in mRNA + S-adenosyl-L-methionine = a 5'-end (N(7)-methyl 5'-triphosphoguanosine)-ribonucleoside in mRNA + S-adenosyl-L-homocysteine. Its function is as follows. The replicase polyprotein of coronaviruses is a multifunctional protein: it contains the activities necessary for the transcription of negative stranded RNA, leader RNA, subgenomic mRNAs and progeny virion RNA as well as proteinases responsible for the cleavage of the polyprotein into functional products. In terms of biological role, inhibits host translation by interacting with the 40S ribosomal subunit. The nsp1-40S ribosome complex further induces an endonucleolytic cleavage near the 5'UTR of host mRNAs, targeting them for degradation. Viral mRNAs are not susceptible to nsp1-mediated endonucleolytic RNA cleavage thanks to the presence of a 5'-end leader sequence and are therefore protected from degradation. By suppressing host gene expression, nsp1 facilitates efficient viral gene expression in infected cells and evasion from host immune response. Functionally, may play a role in the modulation of host cell survival signaling pathway by interacting with host PHB and PHB2. Indeed, these two proteins play a role in maintaining the functional integrity of the mitochondria and protecting cells from various stresses. Responsible for the cleavages located at the N-terminus of the replicase polyprotein. In addition, PL-PRO possesses a deubiquitinating/deISGylating activity and processes both 'Lys-48'- and 'Lys-63'-linked polyubiquitin chains from cellular substrates. Participates together with nsp4 in the assembly of virally-induced cytoplasmic double-membrane vesicles necessary for viral replication. Antagonizes innate immune induction of type I interferon by blocking the phosphorylation, dimerization and subsequent nuclear translocation of host IRF3. Also prevents host NF-kappa-B signaling. Its function is as follows. Participates in the assembly of virally-induced cytoplasmic double-membrane vesicles necessary for viral replication. In terms of biological role, cleaves the C-terminus of replicase polyprotein at 11 sites. Recognizes substrates containing the core sequence [ILMVF]-Q-|-[SGACN]. Also able to bind an ADP-ribose-1''-phosphate (ADRP). Functionally, plays a role in the initial induction of autophagosomes from host endoplasmic reticulum. Later, limits the expansion of these phagosomes that are no longer able to deliver viral components to lysosomes. Forms a hexadecamer with nsp8 (8 subunits of each) that may participate in viral replication by acting as a primase. Alternatively, may synthesize substantially longer products than oligonucleotide primers. Its function is as follows. Forms a hexadecamer with nsp7 (8 subunits of each) that may participate in viral replication by acting as a primase. Alternatively, may synthesize substantially longer products than oligonucleotide primers. In terms of biological role, forms a primer, NSP9-pU, which is utilized by the polymerase for the initiation of RNA chains. Interacts with ribosome signal recognition particle RNA (SRP). Together with NSP8, suppress protein integration into the cell membrane, thereby disrupting host immune defenses. Functionally, plays a pivotal role in viral transcription by stimulating both nsp14 3'-5' exoribonuclease and nsp16 2'-O-methyltransferase activities. Therefore plays an essential role in viral mRNAs cap methylation. RNA-directed RNA polymerase that catalyzes the transcription of viral genomic and subgenomic RNAs. Acts in complex with nsp7 and nsp8 to transcribe both the minus and positive strands of genomic RNA. The kinase-like NiRAN domain of NSP12 attaches one or more nucleotides to the amino terminus of NSP9, forming a covalent RNA-protein intermediate that serves as transcription/replication primer. Subgenomic RNAs (sgRNAs) are formed by discontinuous transcription: The polymerase has the ability to pause at transcription-regulating sequences (TRS) and jump to the leader TRS, resulting in a major deletion. This creates a series of subgenomic RNAs that are replicated, transcribed and translated. In addition, Nsp12 is a subunit of the viral RNA capping enzyme that catalyzes the RNA guanylyltransferase reaction for genomic and sub-genomic RNAs. Subsequently, the NiRAN domain transfers RNA to GDP, and forms the core cap structure GpppA-RNA. Its function is as follows. Multi-functional protein with a zinc-binding domain in N-terminus displaying RNA and DNA duplex-unwinding activities with 5' to 3' polarity. Activity of helicase is dependent on magnesium. In terms of biological role, plays a role in viral RNA synthesis through two distinct activities. The N7-guanine methyltransferase activity plays a role in the formation of the cap structure GpppA-RNA. The proofreading exoribonuclease reduces the sensitivity of the virus to RNA mutagens during replication. This activity acts on both ssRNA and dsRNA in a 3'-5' direction. Functionally, plays a role in viral transcription/replication and prevents the simultaneous activation of host cell dsRNA sensors, such as MDA5/IFIH1, OAS, and PKR. Acts by degrading the 5'-polyuridines generated during replication of the poly(A) region of viral genomic and subgenomic RNAs. Catalyzes a two-step reaction in which a 2'3'-cyclic phosphate (2'3'-cP) is first generated by 2'-O transesterification, which is then hydrolyzed to a 3'-phosphate (3'-P). If not degraded, poly(U) RNA would hybridize with poly(A) RNA tails and activate host dsRNA sensors. Methyltransferase that mediates mRNA cap 2'-O-ribose methylation to the 5'-cap structure of viral mRNAs. N7-methyl guanosine cap is a prerequisite for binding of nsp16. Therefore plays an essential role in viral mRNAs cap methylation which is essential to evade immune system. This Murine coronavirus (strain 2) (MHV-2) protein is Replicase polyprotein 1ab (rep).